Here is a 92-residue protein sequence, read N- to C-terminus: Small ribosomal subunit protein uS19c (92 aa).

Belongs to the universal ribosomal protein uS19 family.

The protein localises to the plastid. It localises to the chloroplast. Protein S19 forms a complex with S13 that binds strongly to the 16S ribosomal RNA. The chain is Small ribosomal subunit protein uS19c from Piper cenocladum (Ant piper).